Consider the following 283-residue polypeptide: Elongation factor Ts (283 aa).

The involved in Mg(2+) ion dislocation from EF-Tu stretch occupies residues 80-83 (TDFV).

The protein belongs to the EF-Ts family.

The protein localises to the cytoplasm. Its function is as follows. Associates with the EF-Tu.GDP complex and induces the exchange of GDP to GTP. It remains bound to the aminoacyl-tRNA.EF-Tu.GTP complex up to the GTP hydrolysis stage on the ribosome. The sequence is that of Elongation factor Ts from Salmonella choleraesuis (strain SC-B67).